A 189-amino-acid chain; its full sequence is UPF0316 protein Sca_1484 (189 aa).

3 helical membrane-spanning segments follow: residues 8 to 28, 40 to 60, and 66 to 86; these read PWLMLLAIFVINVAYVTCLTV, VAAAVSFIEVLIYIIGLGLVM, and FQNIIAYALGFSVGIIVGMKI.

The protein belongs to the UPF0316 family.

The protein localises to the cell membrane. This chain is UPF0316 protein Sca_1484, found in Staphylococcus carnosus (strain TM300).